We begin with the raw amino-acid sequence, 426 residues long: Enolase 1 (426 aa).

(2R)-2-phosphoglycerate is bound at residue Gln163. Glu205 functions as the Proton donor in the catalytic mechanism. Residues Asp242, Glu283, and Asp310 each coordinate Mg(2+). (2R)-2-phosphoglycerate contacts are provided by Lys335, Arg364, Ser365, and Lys386. Lys335 serves as the catalytic Proton acceptor.

Belongs to the enolase family. Mg(2+) serves as cofactor.

It localises to the cytoplasm. The protein resides in the secreted. The protein localises to the cell surface. The catalysed reaction is (2R)-2-phosphoglycerate = phosphoenolpyruvate + H2O. It functions in the pathway carbohydrate degradation; glycolysis; pyruvate from D-glyceraldehyde 3-phosphate: step 4/5. Its function is as follows. Catalyzes the reversible conversion of 2-phosphoglycerate (2-PG) into phosphoenolpyruvate (PEP). It is essential for the degradation of carbohydrates via glycolysis. The polypeptide is Enolase 1 (Streptomyces coelicolor (strain ATCC BAA-471 / A3(2) / M145)).